Reading from the N-terminus, the 283-residue chain is Gap junction alpha-6 protein (283 aa).

Over M1–K23 the chain is Cytoplasmic. A helical membrane pass occupies residues V24 to I41. At E42 to R76 the chain is on the extracellular side. The chain crosses the membrane as a helical span at residues L77–V99. Residues V100–R150 lie on the Cytoplasmic side of the membrane. Residues L151–Q173 traverse the membrane as a helical segment. At W174–I208 the chain is on the extracellular side. The helical transmembrane segment at F209 to V231 threads the bilayer. At L232–I283 the chain is on the cytoplasmic side.

This sequence belongs to the connexin family. Alpha-type (group II) subfamily. As to quaternary structure, a connexon is composed of a hexamer of connexins.

It is found in the cell membrane. The protein resides in the cell junction. It localises to the gap junction. One gap junction consists of a cluster of closely packed pairs of transmembrane channels, the connexons, through which materials of low MW diffuse from one cell to a neighboring cell. This chain is Gap junction alpha-6 protein (Gja6), found in Mus musculus (Mouse).